The sequence spans 312 residues: Ribosomal RNA small subunit methyltransferase H (312 aa).

Residues 33-35 (AGH), D53, F79, D100, and Q107 contribute to the S-adenosyl-L-methionine site.

The protein belongs to the methyltransferase superfamily. RsmH family.

It is found in the cytoplasm. The enzyme catalyses cytidine(1402) in 16S rRNA + S-adenosyl-L-methionine = N(4)-methylcytidine(1402) in 16S rRNA + S-adenosyl-L-homocysteine + H(+). In terms of biological role, specifically methylates the N4 position of cytidine in position 1402 (C1402) of 16S rRNA. In Clostridium acetobutylicum (strain ATCC 824 / DSM 792 / JCM 1419 / IAM 19013 / LMG 5710 / NBRC 13948 / NRRL B-527 / VKM B-1787 / 2291 / W), this protein is Ribosomal RNA small subunit methyltransferase H.